The following is a 417-amino-acid chain: Diphosphomevalonate decarboxylase 1 (417 aa).

22–25 is a (R)-5-diphosphomevalonate binding site; it reads YWGK. Residues 39–47 carry the Peroxisomal targeting signal PTS2 motif; it reads RVSLDPDHL. Residues Arg-77, 160–165, and Thr-216 each bind (R)-5-diphosphomevalonate; that span reads SGSACR.

This sequence belongs to the diphosphomevalonate decarboxylase family. As to quaternary structure, homodimer.

Its subcellular location is the peroxisome. It catalyses the reaction (R)-5-diphosphomevalonate + ATP = isopentenyl diphosphate + ADP + phosphate + CO2. The protein operates within isoprenoid biosynthesis; isopentenyl diphosphate biosynthesis via mevalonate pathway; isopentenyl diphosphate from (R)-mevalonate: step 3/3. Its function is as follows. Performs the first committed step in the biosynthesis of isoprene-containing compounds such as sterols and terpenoids. Component of the triterpene saponins (e.g. ginsenosides or panaxosides) and phytosterols biosynthetic pathways. Catalyzes the conversion of mevalonate diphosphate to isopentenyl diphosphate (IPP). The chain is Diphosphomevalonate decarboxylase 1 from Panax ginseng (Korean ginseng).